The following is a 447-amino-acid chain: NADP-specific glutamate dehydrogenase (447 aa).

Substrate-binding residues include Lys92, Gln113, and Lys116. The Proton donor role is filled by Lys128. Gly167 provides a ligand contact to substrate. Residues Thr211 and Asn242 each coordinate NADP(+). Ser380 is a substrate binding site.

The protein belongs to the Glu/Leu/Phe/Val dehydrogenases family. As to quaternary structure, homohexamer.

It catalyses the reaction L-glutamate + NADP(+) + H2O = 2-oxoglutarate + NH4(+) + NADPH + H(+). With respect to regulation, competitively inhibited by homoserine and by glutamine. Functionally, catalyzes the reversible oxidative deamination of glutamate to alpha-ketoglutarate and ammonia. The sequence is that of NADP-specific glutamate dehydrogenase from Escherichia coli (strain K12).